Reading from the N-terminus, the 151-residue chain is UPF0735 ACT domain-containing protein SSP1116 (151 aa).

Positions 74–149 (TLILYVNDIV…HVSKVELISM (76 aa)) constitute an ACT domain.

It belongs to the UPF0735 family.

This Staphylococcus saprophyticus subsp. saprophyticus (strain ATCC 15305 / DSM 20229 / NCIMB 8711 / NCTC 7292 / S-41) protein is UPF0735 ACT domain-containing protein SSP1116.